The following is a 331-amino-acid chain: Lipoyl synthase (331 aa).

Residues 1 to 14 (MSTQLDASQPSNDV) show a composition bias toward polar residues. Positions 1 to 32 (MSTQLDASQPSNDVASPAAYDPTQKQKSQAKT) are disordered. [4Fe-4S] cluster is bound by residues C78, C83, C89, C104, C108, C111, and S318. The Radical SAM core domain occupies 89–307 (CFGKGTATFM…EREAYAMGFS (219 aa)).

This sequence belongs to the radical SAM superfamily. Lipoyl synthase family. It depends on [4Fe-4S] cluster as a cofactor.

Its subcellular location is the cytoplasm. The enzyme catalyses [[Fe-S] cluster scaffold protein carrying a second [4Fe-4S](2+) cluster] + N(6)-octanoyl-L-lysyl-[protein] + 2 oxidized [2Fe-2S]-[ferredoxin] + 2 S-adenosyl-L-methionine + 4 H(+) = [[Fe-S] cluster scaffold protein] + N(6)-[(R)-dihydrolipoyl]-L-lysyl-[protein] + 4 Fe(3+) + 2 hydrogen sulfide + 2 5'-deoxyadenosine + 2 L-methionine + 2 reduced [2Fe-2S]-[ferredoxin]. It participates in protein modification; protein lipoylation via endogenous pathway; protein N(6)-(lipoyl)lysine from octanoyl-[acyl-carrier-protein]: step 2/2. Catalyzes the radical-mediated insertion of two sulfur atoms into the C-6 and C-8 positions of the octanoyl moiety bound to the lipoyl domains of lipoate-dependent enzymes, thereby converting the octanoylated domains into lipoylated derivatives. The polypeptide is Lipoyl synthase (Bordetella avium (strain 197N)).